The primary structure comprises 326 residues: Flavanone 3-dioxygenase 3 (326 aa).

Polar residues predominate over residues 1–15 (MSDTSKGIPQEQLPS). The interval 1–21 (MSDTSKGIPQEQLPSQELHPP) is disordered. One can recognise a Fe2OG dioxygenase domain in the interval 175–276 (EGLQLLSVNC…RISLASIHGF (102 aa)). Fe cation contacts are provided by histidine 200, aspartate 202, and histidine 257. Arginine 267 is a 2-oxoglutarate binding site.

The protein belongs to the iron/ascorbate-dependent oxidoreductase family. Fe(2+) serves as cofactor. The cofactor is L-ascorbate. Expressed at very low levels in roots, leaves, stems and seeds.

It carries out the reaction a (2S)-flavan-4-one + 2-oxoglutarate + O2 = a (2R,3R)-dihydroflavonol + succinate + CO2. Its pathway is secondary metabolite biosynthesis; flavonoid biosynthesis. Its function is as follows. Catalyzes the 3-beta-hydroxylation of 2S-flavanones to 2R,3R-dihydroflavonols which are intermediates in the biosynthesis of flavonols, anthocyanidins, catechins and proanthocyanidins in plants. Converts (2S)-eriodictyol to (+)-taxifolin and (2S)-naringenin to (+)-(2R/3R)-dihydrokaempferol in vitro. This is Flavanone 3-dioxygenase 3 from Oryza sativa subsp. japonica (Rice).